Reading from the N-terminus, the 433-residue chain is Epi-neemfruitin B synthase L1AT (433 aa).

Active-site proton acceptor residues include His151 and Asp372.

Belongs to the plant acyltransferase family. In terms of assembly, monomer. In terms of tissue distribution, mainly expressed in petioles and, to a lower extent, in roots.

The enzyme catalyses (21S)-21-acetyl-1-hydroxy-apo-melianone + acetyl-CoA = epi-neemfruitin B + acetate + CoA + H(+). The protein operates within secondary metabolite biosynthesis; terpenoid biosynthesis. Acetyltransferase involved in the biosynthesis of limonoids triterpene natural products such as azadirachtin, an antifeedant widely used as bioinsecticide, and possessing many medicinal applications including anti-tumoral, anti-malarial, anti-rheumatic, antibacterial, anti-inflammatory, anti-pyretic and diuretic effects. Catalyzes the formation of epi-neemfruitin B from (21S)-21-acetyl-1-hydroxy-apo-melianone. The sequence is that of Epi-neemfruitin B synthase L1AT from Melia azedarach (Chinaberry tree).